The primary structure comprises 127 residues: Large-conductance mechanosensitive channel (127 aa).

3 helical membrane passes run 8 to 28, 30 to 50, and 70 to 90; these read FAFKGNVLDLAIGVIIGAAFG, IVTALVDVVIMPIISIILSLI, and IGVLIKTIIEFLIIAFVLFLF.

The protein belongs to the MscL family. As to quaternary structure, homopentamer.

It localises to the cell membrane. Channel that opens in response to stretch forces in the membrane lipid bilayer. May participate in the regulation of osmotic pressure changes within the cell. This is Large-conductance mechanosensitive channel from Herpetosiphon aurantiacus (strain ATCC 23779 / DSM 785 / 114-95).